A 390-amino-acid chain; its full sequence is Lipid-A-disaccharide synthase (390 aa).

It belongs to the LpxB family.

The catalysed reaction is a lipid X + a UDP-2-N,3-O-bis[(3R)-3-hydroxyacyl]-alpha-D-glucosamine = a lipid A disaccharide + UDP + H(+). It participates in bacterial outer membrane biogenesis; LPS lipid A biosynthesis. Its function is as follows. Condensation of UDP-2,3-diacylglucosamine and 2,3-diacylglucosamine-1-phosphate to form lipid A disaccharide, a precursor of lipid A, a phosphorylated glycolipid that anchors the lipopolysaccharide to the outer membrane of the cell. In Rickettsia felis (strain ATCC VR-1525 / URRWXCal2) (Rickettsia azadi), this protein is Lipid-A-disaccharide synthase.